A 312-amino-acid chain; its full sequence is Tetraacyldisaccharide 4'-kinase (312 aa).

60 to 67 (IAGGSGKT) lines the ATP pocket.

The protein belongs to the LpxK family.

It catalyses the reaction a lipid A disaccharide + ATP = a lipid IVA + ADP + H(+). It participates in glycolipid biosynthesis; lipid IV(A) biosynthesis; lipid IV(A) from (3R)-3-hydroxytetradecanoyl-[acyl-carrier-protein] and UDP-N-acetyl-alpha-D-glucosamine: step 6/6. Functionally, transfers the gamma-phosphate of ATP to the 4'-position of a tetraacyldisaccharide 1-phosphate intermediate (termed DS-1-P) to form tetraacyldisaccharide 1,4'-bis-phosphate (lipid IVA). This is Tetraacyldisaccharide 4'-kinase from Helicobacter pylori (strain J99 / ATCC 700824) (Campylobacter pylori J99).